The sequence spans 474 residues: Phosphomannomutase (474 aa).

The active-site Phosphoserine intermediate is the S101. The Mg(2+) site is built by S101, D242, D244, and D246.

The protein belongs to the phosphohexose mutase family. The cofactor is Mg(2+).

It carries out the reaction alpha-D-mannose 1-phosphate = D-mannose 6-phosphate. The protein is Phosphomannomutase (noeK) of Sinorhizobium fredii (strain NBRC 101917 / NGR234).